The sequence spans 97 residues: Large ribosomal subunit protein eL21 (97 aa).

It belongs to the eukaryotic ribosomal protein eL21 family.

In Methanococcus aeolicus (strain ATCC BAA-1280 / DSM 17508 / OCM 812 / Nankai-3), this protein is Large ribosomal subunit protein eL21.